We begin with the raw amino-acid sequence, 117 residues long: Large ribosomal subunit protein bL20c (117 aa).

This sequence belongs to the bacterial ribosomal protein bL20 family.

The protein localises to the plastid. Functionally, binds directly to 23S ribosomal RNA and is necessary for the in vitro assembly process of the 50S ribosomal subunit. It is not involved in the protein synthesizing functions of that subunit. The chain is Large ribosomal subunit protein bL20c (rpl20) from Euglena longa (Euglenophycean alga).